Here is a 179-residue protein sequence, read N- to C-terminus: Large ribosomal subunit protein uL6 (179 aa).

Belongs to the universal ribosomal protein uL6 family. In terms of assembly, part of the 50S ribosomal subunit.

Functionally, this protein binds to the 23S rRNA, and is important in its secondary structure. It is located near the subunit interface in the base of the L7/L12 stalk, and near the tRNA binding site of the peptidyltransferase center. In Persephonella marina (strain DSM 14350 / EX-H1), this protein is Large ribosomal subunit protein uL6.